Consider the following 212-residue polypeptide: Pyridoxine/pyridoxamine 5'-phosphate oxidase (212 aa).

Substrate is bound by residues 8 to 11 (RREY) and Lys-66. FMN-binding positions include 61 to 66 (RIVLLK), 76 to 77 (FT), Arg-82, Lys-83, and Gln-105. Residues Tyr-123, Arg-127, and Ser-131 each coordinate substrate. Residues 140–141 (QS) and Trp-185 each bind FMN. Position 191–193 (191–193 (RLH)) interacts with substrate. Arg-195 serves as a coordination point for FMN.

This sequence belongs to the pyridoxamine 5'-phosphate oxidase family. In terms of assembly, homodimer. The cofactor is FMN.

It catalyses the reaction pyridoxamine 5'-phosphate + O2 + H2O = pyridoxal 5'-phosphate + H2O2 + NH4(+). It carries out the reaction pyridoxine 5'-phosphate + O2 = pyridoxal 5'-phosphate + H2O2. The protein operates within cofactor metabolism; pyridoxal 5'-phosphate salvage; pyridoxal 5'-phosphate from pyridoxamine 5'-phosphate: step 1/1. Its pathway is cofactor metabolism; pyridoxal 5'-phosphate salvage; pyridoxal 5'-phosphate from pyridoxine 5'-phosphate: step 1/1. Functionally, catalyzes the oxidation of either pyridoxine 5'-phosphate (PNP) or pyridoxamine 5'-phosphate (PMP) into pyridoxal 5'-phosphate (PLP). The chain is Pyridoxine/pyridoxamine 5'-phosphate oxidase from Shewanella amazonensis (strain ATCC BAA-1098 / SB2B).